The primary structure comprises 610 residues: Pentatricopeptide repeat-containing protein At5g40400 (610 aa).

PPR repeat units lie at residues 165–199, 200–234, 235–269, 270–304, 305–339, 340–374, 375–409, 410–445, 446–480, 481–515, 516–546, and 551–586; these read DPVV…GFSV, SVVT…GIHP, NTYT…GFEP, DLVT…RVVP, DLVT…GIKP, DCMS…SVVP, DRFT…KVDI, PFEV…GHEA, KPET…NQVL, DAKT…EVKP, DSFI…FAME, and DPES…GFVP.

This sequence belongs to the PPR family. P subfamily.

In Arabidopsis thaliana (Mouse-ear cress), this protein is Pentatricopeptide repeat-containing protein At5g40400.